The primary structure comprises 1481 residues: RNA helicase aquarius (1481 aa).

The interval 1–416 (MAAPAQPKKI…LVSRHERRIS (416 aa)) is helical region with structural similarity to ARM repeat domains. Residues 417-1481 (QIQQLNQMPL…DAESVPTETE (1065 aa)) form a required for assembly of the IB complex region. Residues 754-773 (RSGKGKKRKDADGEEDDTEE) are disordered. ATP is bound by residues Gln801, Gln806, and 826 to 831 (GTGKTD). Lys1055 bears the N6-acetyllysine mark. Residues 1396 to 1414 (EEGEEGQSQETEMEAEEET) are compositionally biased toward acidic residues. The segment at 1396–1481 (EEGEEGQSQE…DAESVPTETE (86 aa)) is disordered. Positions 1418-1448 (QGNLTPSPADASLSQETPAAQPDCSSQTEDT) are enriched in polar residues. Residues 1455–1468 (ATAAEPVSAAAEAA) show a composition bias toward low complexity.

This sequence belongs to the CWF11 family. Identified in the spliceosome C complex. Component of the XAB2 complex, a multimeric protein complex composed of XAB2, PRPF19, AQR, ZNF830, ISY1, and PPIE. Identified in a pentameric intron-binding (IB) complex composed of AQR, XAB2, ISY1, ZNF830 and PPIE that is incorporated into the spliceosome as a preassembled complex. The IB complex does not contain PRPF19. Within the spliceosome, interacts with SNRPA1, SF3B1, SF3B3, SF3A1 and SF3A2.

Its subcellular location is the nucleus. The protein localises to the nucleoplasm. The catalysed reaction is ATP + H2O = ADP + phosphate + H(+). Its function is as follows. Involved in pre-mRNA splicing as component of the spliceosome. Intron-binding spliceosomal protein required to link pre-mRNA splicing and snoRNP (small nucleolar ribonucleoprotein) biogenesis. Plays a key role in position-dependent assembly of intron-encoded box C/D small snoRNP, splicing being required for snoRNP assembly. May act by helping the folding of the snoRNA sequence. Binds to intron of pre-mRNAs in a sequence-independent manner, contacting the region between snoRNA and the branchpoint of introns (40 nucleotides upstream of the branchpoint) during the late stages of splicing. Has ATP-dependent RNA helicase activity and can unwind double-stranded RNA molecules with a 3' overhang (in vitro). The polypeptide is RNA helicase aquarius (Aqr) (Mus musculus (Mouse)).